A 326-amino-acid chain; its full sequence is Polycomb complex protein BMI-1 (326 aa).

An RING-type zinc finger spans residues 18 to 57; that stretch reads CVLCGGYFIDATTIIECLHSFCKTCIVRYLETSKYCPICD. Positions 81 to 95 match the Nuclear localization signal motif; the sequence is KLVPGLFKNEMKRRR. The interaction with PHC2 stretch occupies residues 162 to 182; sequence RYLRCPAAMTVMHLRKFLRSK. An interaction with E4F1 region spans residues 164-228; the sequence is LRCPAAMTVM…GPLPLKYRVR (65 aa). A disordered region spans residues 236-326; that stretch reads ISHQRDGLTN…VNGSSATSSG (91 aa). Over residues 266–278 the composition is skewed to low complexity; sequence PSTSSCLPSPSTP. Over residues 279-309 the composition is skewed to polar residues; sequence VQSPHPQFPHISSTMNGTSNSPSGNHQSSFA. A compositionally biased stretch (low complexity) spans 315 to 326; sequence SSVNGSSATSSG.

As to quaternary structure, component of a PRC1-like complex. Identified in a PRC1-like HPRC-H complex with CBX2, CBX4, CBX8, PHC1, PHC2, PHC3 RING1 and RNF2. Interacts with RNF2/RING2. Interacts with RING1. Part of a complex that contains RNF2, UB2D3 and BMI1, where RNF2 and BMI1 form a tight heterodimer, and UB2D3 interacts only with RNF2. The complex composed of RNF2, UB2D3 and BMI1 binds nucleosomes, and has activity only with nucleosomal histone H2A. Interacts with CBX7 and CBX8. Interacts with SPOP. Part of a complex consisting of BMI1, CUL3 and SPOP. Interacts with E4F1. Interacts with PHC2. Interacts with zinc finger protein ZNF277. May be part of a complex including at least ZNF277, BMI1 and RNF2/RING2. Post-translationally, monoubiquitinated. May be polyubiquitinated; which does not lead to proteasomal degradation.

It is found in the nucleus. The protein localises to the cytoplasm. Its function is as follows. Component of a Polycomb group (PcG) multiprotein PRC1-like complex, a complex class required to maintain the transcriptionally repressive state of many genes, including Hox genes, throughout development. PcG PRC1 complex acts via chromatin remodeling and modification of histones; it mediates monoubiquitination of histone H2A 'Lys-119', rendering chromatin heritably changed in its expressibility. The complex composed of RNF2, UB2D3 and BMI1 binds nucleosomes, and has activity only with nucleosomal histone H2A. In the PRC1-like complex, regulates the E3 ubiquitin-protein ligase activity of RNF2/RING2. This is Polycomb complex protein BMI-1 (BMI1) from Homo sapiens (Human).